We begin with the raw amino-acid sequence, 456 residues long: Bifunctional protein GlmU (456 aa).

Positions 1-229 (MLNNTMSVVI…ISETDGVNNR (229 aa)) are pyrophosphorylase. UDP-N-acetyl-alpha-D-glucosamine is bound by residues 11–14 (LAAG), Lys-25, Gln-76, 81–82 (GT), 103–105 (YGD), Gly-140, Glu-154, Asn-169, and Asn-227. Residue Asp-105 coordinates Mg(2+). A Mg(2+)-binding site is contributed by Asn-227. Residues 230 to 250 (LQLSRLERIYQAEQAEKLLLA) form a linker region. An N-acetyltransferase region spans residues 251 to 456 (GVMLRDPARF…QGWQRPVKKK (206 aa)). UDP-N-acetyl-alpha-D-glucosamine contacts are provided by Arg-333 and Lys-351. Catalysis depends on His-363, which acts as the Proton acceptor. The UDP-N-acetyl-alpha-D-glucosamine site is built by Tyr-366 and Asn-377. Residues Ala-380, 386–387 (NY), Ser-405, Ala-423, and Arg-440 contribute to the acetyl-CoA site.

It in the N-terminal section; belongs to the N-acetylglucosamine-1-phosphate uridyltransferase family. The protein in the C-terminal section; belongs to the transferase hexapeptide repeat family. Homotrimer. Mg(2+) is required as a cofactor.

It localises to the cytoplasm. It carries out the reaction alpha-D-glucosamine 1-phosphate + acetyl-CoA = N-acetyl-alpha-D-glucosamine 1-phosphate + CoA + H(+). The enzyme catalyses N-acetyl-alpha-D-glucosamine 1-phosphate + UTP + H(+) = UDP-N-acetyl-alpha-D-glucosamine + diphosphate. The protein operates within nucleotide-sugar biosynthesis; UDP-N-acetyl-alpha-D-glucosamine biosynthesis; N-acetyl-alpha-D-glucosamine 1-phosphate from alpha-D-glucosamine 6-phosphate (route II): step 2/2. It participates in nucleotide-sugar biosynthesis; UDP-N-acetyl-alpha-D-glucosamine biosynthesis; UDP-N-acetyl-alpha-D-glucosamine from N-acetyl-alpha-D-glucosamine 1-phosphate: step 1/1. It functions in the pathway bacterial outer membrane biogenesis; LPS lipid A biosynthesis. In terms of biological role, catalyzes the last two sequential reactions in the de novo biosynthetic pathway for UDP-N-acetylglucosamine (UDP-GlcNAc). The C-terminal domain catalyzes the transfer of acetyl group from acetyl coenzyme A to glucosamine-1-phosphate (GlcN-1-P) to produce N-acetylglucosamine-1-phosphate (GlcNAc-1-P), which is converted into UDP-GlcNAc by the transfer of uridine 5-monophosphate (from uridine 5-triphosphate), a reaction catalyzed by the N-terminal domain. This Enterobacter sp. (strain 638) protein is Bifunctional protein GlmU.